A 121-amino-acid polypeptide reads, in one-letter code: Immunoglobulin kappa variable 4-1 (121 aa).

The N-terminal stretch at 1–20 (MVLQTQVFISLLLWISGAYG) is a signal peptide. The segment at 21 to 43 (DIVMTQSPDSLAVSLGERATINC) is framework-1. Positions 21–121 (DIVMTQSPDS…YYCQQYYSTP (101 aa)) constitute an Ig-like domain. An intrachain disulfide couples Cys43 to Cys114. Positions 44–60 (KSSQSVLYSSNNKNYLA) are complementarity-determining-1. The framework-2 stretch occupies residues 61-75 (WYQQKPGQPPKLLIY). The tract at residues 76-82 (WASTRES) is complementarity-determining-2. The interval 83-114 (GVPDRFSGSGSGTDFTLTISSLQAEDVAVYYC) is framework-3. The complementarity-determining-3 stretch occupies residues 115–121 (QQYYSTP).

Immunoglobulins are composed of two identical heavy chains and two identical light chains; disulfide-linked.

Its subcellular location is the secreted. It is found in the cell membrane. Its function is as follows. V segment of the variable domain of immunoglobulins light chain that participates in the antigen recognition. Immunoglobulins, also known as antibodies, are membrane-bound or secreted glycoproteins produced by B lymphocytes. In the recognition phase of humoral immunity, the membrane-bound immunoglobulins serve as receptors which, upon binding of a specific antigen, trigger the clonal expansion and differentiation of B lymphocytes into immunoglobulins-secreting plasma cells. Secreted immunoglobulins mediate the effector phase of humoral immunity, which results in the elimination of bound antigens. The antigen binding site is formed by the variable domain of one heavy chain, together with that of its associated light chain. Thus, each immunoglobulin has two antigen binding sites with remarkable affinity for a particular antigen. The variable domains are assembled by a process called V-(D)-J rearrangement and can then be subjected to somatic hypermutations which, after exposure to antigen and selection, allow affinity maturation for a particular antigen. The polypeptide is Immunoglobulin kappa variable 4-1 (Homo sapiens (Human)).